We begin with the raw amino-acid sequence, 189 residues long: dTTP/UTP pyrophosphatase (189 aa).

Asp64 (proton acceptor) is an active-site residue.

The protein belongs to the Maf family. YhdE subfamily. A divalent metal cation is required as a cofactor.

It is found in the cytoplasm. It carries out the reaction dTTP + H2O = dTMP + diphosphate + H(+). The catalysed reaction is UTP + H2O = UMP + diphosphate + H(+). Nucleoside triphosphate pyrophosphatase that hydrolyzes dTTP and UTP. May have a dual role in cell division arrest and in preventing the incorporation of modified nucleotides into cellular nucleic acids. The protein is dTTP/UTP pyrophosphatase of Syntrophomonas wolfei subsp. wolfei (strain DSM 2245B / Goettingen).